A 233-amino-acid polypeptide reads, in one-letter code: Short chain dehydrogenase trt9 (233 aa).

Aspartate 33, arginine 95, tyrosine 127, lysine 131, and valine 160 together coordinate NADP(+). The active-site Proton donor is the tyrosine 127. The Lowers pKa of active site Tyr role is filled by lysine 131.

This sequence belongs to the short-chain dehydrogenases/reductases (SDR) family.

It functions in the pathway secondary metabolite biosynthesis; terpenoid biosynthesis. Its function is as follows. Short chain dehydrogenase; part of the gene cluster that mediates the biosynthesis of terretonin, a fungal meroterpenoid that acts as a mycotoxin. The first step of the pathway is the synthesis of 3,5-dimethylorsellinic acid (DMOA) by the polyketide synthase trt4. DMOA is then prenylated into farnesyl-DMOA by the polyprenyl transferase trt2. Methylation by the methyltransferase trt5 then leads to farnesyl-DMOA methyl ester which is further subject to epoxidation by the FAD-dependent monooxygenase trt8 to yield epoxyfarnesyl-DMOA methyl ester. Cyclization of epoxyfarnesyl-DMOA methyl ester by the terpene cyclase trt1 leads to a tetracycle intermediate which is in turn converted to preterretonin. Dehydrogenase trt9 comes next to transform preterretonin to preterrenoid. The FAD-dependent monooxygenase trt3 is then required for the C-hydroxylation at C16 of preterrenoid to yield terrenoid. The cytochrome P450 trt6 catalyzes three successive oxidations to transform terrenoid into an unstable intermediate, which then undergoes the D-ring expansion and unusual rearrangement of the methoxy group to afford the core skeleton of terretonin. Trt14 catalyzes the D-ring expansion of terretonin involving intramolecular methoxy rearrangement as well as the hydrolysis of the expanded D-ring and the methyl ester moiety. Finally, the nonheme iron-dependent dioxygenase trt7 accomplishes the last two oxidation reactions steps to complete the biosynthesis of terretonin. Terretonin C is produced via spontaneous decarboxylation of the terretonin precursor. Another shunt product of the terretonin biosynthesis is dihydrofarnesyl-DMOA, derived from epoxyfarnesyl-DMOA through hydrolysis of the epoxide. This is Short chain dehydrogenase trt9 from Aspergillus terreus (strain NIH 2624 / FGSC A1156).